A 340-amino-acid chain; its full sequence is Glyceraldehyde-3-phosphate dehydrogenase (340 aa).

NAD(+) contacts are provided by residues 11–12 and Gly-109; that span reads TI. 138–140 is a binding site for D-glyceraldehyde 3-phosphate; sequence SCN. Cys-139 (nucleophile) is an active-site residue. An NAD(+)-binding site is contributed by Arg-167. 193–194 contacts D-glyceraldehyde 3-phosphate; it reads HA. Gln-300 contributes to the NAD(+) binding site.

This sequence belongs to the glyceraldehyde-3-phosphate dehydrogenase family. In terms of assembly, homotetramer.

Its subcellular location is the cytoplasm. The enzyme catalyses D-glyceraldehyde 3-phosphate + phosphate + NADP(+) = (2R)-3-phospho-glyceroyl phosphate + NADPH + H(+). The catalysed reaction is D-glyceraldehyde 3-phosphate + phosphate + NAD(+) = (2R)-3-phospho-glyceroyl phosphate + NADH + H(+). The protein operates within carbohydrate degradation; glycolysis; pyruvate from D-glyceraldehyde 3-phosphate: step 1/5. The chain is Glyceraldehyde-3-phosphate dehydrogenase from Saccharolobus islandicus (strain L.S.2.15 / Lassen #1) (Sulfolobus islandicus).